Consider the following 64-residue polypeptide: MYATVTVTVLLLISSGIFCQNEKLCSNGGTECNRHCGQNNTVGICHGQNGKLKCECVEYKRKMF.

The first 19 residues, 1–19 (MYATVTVTVLLLISSGIFC), serve as a signal peptide directing secretion. 3 cysteine pairs are disulfide-bonded: C25-C45, C32-C54, and C36-C56.

Expressed by the venom gland.

The protein resides in the secreted. The chain is Putative neurotoxin-H from Lychas mucronatus (Chinese swimming scorpion).